The primary structure comprises 151 residues: Ribosome maturation factor RimP (151 aa).

This sequence belongs to the RimP family.

The protein localises to the cytoplasm. In terms of biological role, required for maturation of 30S ribosomal subunits. The chain is Ribosome maturation factor RimP from Vibrio parahaemolyticus serotype O3:K6 (strain RIMD 2210633).